Consider the following 118-residue polypeptide: Large ribosomal subunit protein uL18 (118 aa).

This sequence belongs to the universal ribosomal protein uL18 family. In terms of assembly, part of the 50S ribosomal subunit; part of the 5S rRNA/L5/L18/L25 subcomplex. Contacts the 5S and 23S rRNAs.

Functionally, this is one of the proteins that bind and probably mediate the attachment of the 5S RNA into the large ribosomal subunit, where it forms part of the central protuberance. This Helicobacter pylori (strain P12) protein is Large ribosomal subunit protein uL18.